The primary structure comprises 491 residues: UDP-N-acetylmuramate--L-alanine ligase (491 aa).

126–132 (GTHGKTT) lines the ATP pocket.

Belongs to the MurCDEF family.

The protein localises to the cytoplasm. It carries out the reaction UDP-N-acetyl-alpha-D-muramate + L-alanine + ATP = UDP-N-acetyl-alpha-D-muramoyl-L-alanine + ADP + phosphate + H(+). It functions in the pathway cell wall biogenesis; peptidoglycan biosynthesis. In terms of biological role, cell wall formation. This Photorhabdus laumondii subsp. laumondii (strain DSM 15139 / CIP 105565 / TT01) (Photorhabdus luminescens subsp. laumondii) protein is UDP-N-acetylmuramate--L-alanine ligase.